The sequence spans 556 residues: Glucose-6-phosphate isomerase (556 aa).

Glu-363 acts as the Proton donor in catalysis. Catalysis depends on residues His-394 and Lys-522.

It belongs to the GPI family.

It is found in the cytoplasm. It catalyses the reaction alpha-D-glucose 6-phosphate = beta-D-fructose 6-phosphate. It functions in the pathway carbohydrate biosynthesis; gluconeogenesis. The protein operates within carbohydrate degradation; glycolysis; D-glyceraldehyde 3-phosphate and glycerone phosphate from D-glucose: step 2/4. Functionally, catalyzes the reversible isomerization of glucose-6-phosphate to fructose-6-phosphate. In Frankia casuarinae (strain DSM 45818 / CECT 9043 / HFP020203 / CcI3), this protein is Glucose-6-phosphate isomerase.